The chain runs to 311 residues: MALPILLDCDPGHDDAIAIVLALASPELDVKAITSSAGNQTPEKTLRNVLRMLTLLNRTDIPVAGGAVKPLMRDLIIADNVHGESGLDGPALPEPTFAPQNCTAVELMAKTLRESAEPVTIVSTGPQTNVALLLNSHPELHSKIARIVIMGGAMGIGNWTPAAEFNIYVDPEAAEIVFQSGIPVVMAGLDVTHKAQIHVEDTERFRAIGNPVSTIVAELLDFFLEYHKDEKWGFVGAPLHDPCTIAWLLKPELFTTVERWVGVETQGKYTQGMTVVDYYYLTGNKPNATVMVDVDRQGFVDLLAERLKFYA.

Histidine 240 is a catalytic residue.

It belongs to the IUNH family. RihA subfamily.

Hydrolyzes with equal efficiency cytidine or uridine to ribose and cytosine or uracil, respectively. The sequence is that of Pyrimidine-specific ribonucleoside hydrolase RihA from Escherichia fergusonii (strain ATCC 35469 / DSM 13698 / CCUG 18766 / IAM 14443 / JCM 21226 / LMG 7866 / NBRC 102419 / NCTC 12128 / CDC 0568-73).